The sequence spans 417 residues: Serine hydroxymethyltransferase (417 aa).

Residues L121 and 125–127 (GHL) each bind (6S)-5,6,7,8-tetrahydrofolate. K229 is modified (N6-(pyridoxal phosphate)lysine). 355-357 (SPF) lines the (6S)-5,6,7,8-tetrahydrofolate pocket.

It belongs to the SHMT family. As to quaternary structure, homodimer. Pyridoxal 5'-phosphate is required as a cofactor.

It localises to the cytoplasm. It catalyses the reaction (6R)-5,10-methylene-5,6,7,8-tetrahydrofolate + glycine + H2O = (6S)-5,6,7,8-tetrahydrofolate + L-serine. Its pathway is one-carbon metabolism; tetrahydrofolate interconversion. It participates in amino-acid biosynthesis; glycine biosynthesis; glycine from L-serine: step 1/1. Functionally, catalyzes the reversible interconversion of serine and glycine with tetrahydrofolate (THF) serving as the one-carbon carrier. This reaction serves as the major source of one-carbon groups required for the biosynthesis of purines, thymidylate, methionine, and other important biomolecules. Also exhibits THF-independent aldolase activity toward beta-hydroxyamino acids, producing glycine and aldehydes, via a retro-aldol mechanism. The chain is Serine hydroxymethyltransferase from Edwardsiella ictaluri (strain 93-146).